The chain runs to 198 residues: MEKYLSLSGNHSSNKRSLEGLSAFRSLEELILDNNQLGDDLVLPGLPRLHTLTLNKNRITDLENLLDHLAEVTPALEYLSLLGNVACPNELVSLEKDEEDYKRYRCFVLYKLPNLKFLDAQKVTRQEREEALVRGVFMKVVKPKASSEDVASSPERHYTPLPSASRELTSHQGVLGKCRYVYYGKNSEGNRFIRDDQL.

LRR repeat units lie at residues 2–22, 26–47, 48–69, and 75–95; these read EKYL…EGLS, SLEE…PGLP, RLHT…LDHL, and ALEY…VSLE. The LRRCT domain maps to 96-134; it reads KDEEDYKRYRCFVLYKLPNLKFLDAQKVTRQEREEALVR.

In the embryo, expressed in melanoblasts. In the fetus, expressed in melanocytes. Not detected in retinal pigment epithelial cells.

In terms of biological role, required for melanocyte differentiation. The sequence is that of Leucine-rich melanocyte differentiation-associated protein from Homo sapiens (Human).